An 852-amino-acid polypeptide reads, in one-letter code: Beta-galactosidase 8 (852 aa).

A signal peptide spans 1–29 (MEIAAKMVKVRKMEMILLLILVIVVAATA). Residue Asn-31 is glycosylated (N-linked (GlcNAc...) asparagine). Glu-188 (proton donor) is an active-site residue. Glu-257 acts as the Nucleophile in catalysis. Residues Asn-258, Asn-475, Asn-766, and Asn-807 are each glycosylated (N-linked (GlcNAc...) asparagine). One can recognise an SUEL-type lectin domain in the interval 766-852 (NRTRPVLSLK…KSLAVEASCS (87 aa)).

Belongs to the glycosyl hydrolase 35 family. In terms of tissue distribution, expressed in roots, flowers and siliques.

The protein resides in the secreted. It localises to the extracellular space. It is found in the apoplast. The catalysed reaction is Hydrolysis of terminal non-reducing beta-D-galactose residues in beta-D-galactosides.. The chain is Beta-galactosidase 8 (BGAL8) from Arabidopsis thaliana (Mouse-ear cress).